A 112-amino-acid polypeptide reads, in one-letter code: Protein Churchill (112 aa).

11 residues coordinate Zn(2+): cysteine 2, cysteine 5, cysteine 30, cysteine 33, histidine 59, cysteine 61, cysteine 64, histidine 66, histidine 71, cysteine 88, and cysteine 91.

The protein belongs to the Churchill family.

Its function is as follows. Transcriptional activator that mediates FGF signaling during neural development. Plays a role in the regulation of cell movement. Does not bind DNA by itself. The sequence is that of Protein Churchill (churc1) from Xenopus laevis (African clawed frog).